A 1036-amino-acid polypeptide reads, in one-letter code: Chitin synthase 1 (1036 aa).

Positions 1–10 are enriched in pro residues; sequence MDGPPSPTRV. Residues 1–153 are disordered; the sequence is MDGPPSPTRV…RRPLPPAPLF (153 aa). Asn-38 carries an N-linked (GlcNAc...) asparagine glycan. A compositionally biased stretch (low complexity) spans 86-108; it reads PSIPLSSSNPRSPIRPSTPSRVS. The N-linked (GlcNAc...) asparagine glycan is linked to Asn-179. Positions 189–229 are disordered; sequence RASLKSAHSYTTDSTFTEDDDITNEKLNHYGPAPEGRQDRR. Residues 194-203 show a composition bias toward polar residues; sequence SAHSYTTDST. Helical transmembrane passes span 659–679, 699–719, 733–753, 776–796, 808–828, 908–928, and 945–967; these read FISL…FYFV, IFVI…ILSL, TMVT…YIVI, IFTN…LMSF, SAQY…YAFC, YVVA…SEAY, and WSVA…INIV. Residues 994-1019 are disordered; the sequence is AGLGSGFSESGKTGITSGSGMSGMSL. A compositionally biased stretch (low complexity) spans 1001–1019; the sequence is SESGKTGITSGSGMSGMSL.

Belongs to the chitin synthase family. Class II subfamily.

It is found in the cell membrane. It catalyses the reaction [(1-&gt;4)-N-acetyl-beta-D-glucosaminyl](n) + UDP-N-acetyl-alpha-D-glucosamine = [(1-&gt;4)-N-acetyl-beta-D-glucosaminyl](n+1) + UDP + H(+). Polymerizes chitin, a structural polymer of the cell wall and septum, by transferring the sugar moiety of UDP-GlcNAc to the non-reducing end of the growing chitin polymer. CHS1 mainly responsible for normal yeast cell reproductive growth. The polypeptide is Chitin synthase 1 (Exophiala dermatitidis (strain ATCC 34100 / CBS 525.76 / NIH/UT8656) (Black yeast)).